We begin with the raw amino-acid sequence, 102 residues long: MYAIIKTGGKQIKVEEGQTVYIEKLAAEAGETVTFEDVLFVGGDSVKVGNPTVAGATVTAKVEKQGRAKKITVFRYKPKKNVHKKQGHRQPYTKLTIEKINA.

This sequence belongs to the bacterial ribosomal protein bL21 family. In terms of assembly, part of the 50S ribosomal subunit. Contacts protein L20.

This protein binds to 23S rRNA in the presence of protein L20. The polypeptide is Large ribosomal subunit protein bL21 (Bacillus velezensis (strain DSM 23117 / BGSC 10A6 / LMG 26770 / FZB42) (Bacillus amyloliquefaciens subsp. plantarum)).